The chain runs to 493 residues: Cobyric acid synthase (493 aa).

In terms of domain architecture, GATase cobBQ-type spans 246–440 (PIDIAVIKMP…IHGVFDGVAF (195 aa)). C326 (nucleophile) is an active-site residue. Residue H432 is part of the active site.

This sequence belongs to the CobB/CobQ family. CobQ subfamily.

It functions in the pathway cofactor biosynthesis; adenosylcobalamin biosynthesis. Its function is as follows. Catalyzes amidations at positions B, D, E, and G on adenosylcobyrinic A,C-diamide. NH(2) groups are provided by glutamine, and one molecule of ATP is hydrogenolyzed for each amidation. This is Cobyric acid synthase from Clostridium botulinum (strain Loch Maree / Type A3).